The primary structure comprises 562 residues: Actin-related protein 8 (562 aa).

An ATP-binding site is contributed by 248–251; the sequence is DVGD.

The protein belongs to the actin family. ARP8 subfamily. As to quaternary structure, component of the chromatin remodeling Ino80 complex. Exists as monomers and dimers, but the dimer is most probably the biologically relevant form required for stable interactions with histones that exploits the twofold symmetry of the nucleosome core.

It is found in the nucleus. Functionally, plays an important role in the functional organization of mitotic chromosomes. Exhibits low basal ATPase activity, and unable to polymerize. Proposed core component of the chromatin remodeling INO80 complex which is involved in transcriptional regulation, DNA replication and probably DNA repair. Strongly prefer nucleosomes and H3-H4 tetramers over H2A-H2B dimers, suggesting it may act as a nucleosome recognition module within the complex. The chain is Actin-related protein 8 from Aedes aegypti (Yellowfever mosquito).